The primary structure comprises 438 residues: Enolase (438 aa).

His159 and Glu168 together coordinate substrate. Glu211 acts as the Proton donor in catalysis. Residues Asp246, Glu297, and Asp322 each coordinate Mg(2+). Positions 297 and 322 each coordinate substrate. Catalysis depends on Lys347, which acts as the Proton acceptor. Substrate-binding positions include 374-377 (SHRS) and Lys398.

It belongs to the enolase family. In terms of assembly, homodimer. Mg(2+) is required as a cofactor.

The protein localises to the cytoplasm. The enzyme catalyses (2R)-2-phosphoglycerate = phosphoenolpyruvate + H2O. Its pathway is carbohydrate degradation; glycolysis; pyruvate from D-glyceraldehyde 3-phosphate: step 4/5. Involved in osmoadaptation. This Emericella nidulans (strain FGSC A4 / ATCC 38163 / CBS 112.46 / NRRL 194 / M139) (Aspergillus nidulans) protein is Enolase (enoA).